The chain runs to 166 residues: NAD(P)H-quinone oxidoreductase subunit I, chloroplastic (166 aa).

2 consecutive 4Fe-4S ferredoxin-type domains span residues 55 to 84 (GRIH…VDWK) and 95 to 124 (LNYS…MTEE). 8 residues coordinate [4Fe-4S] cluster: C64, C67, C70, C74, C104, C107, C110, and C114.

Belongs to the complex I 23 kDa subunit family. NDH is composed of at least 16 different subunits, 5 of which are encoded in the nucleus. Requires [4Fe-4S] cluster as cofactor.

The protein resides in the plastid. It is found in the chloroplast thylakoid membrane. The enzyme catalyses a plastoquinone + NADH + (n+1) H(+)(in) = a plastoquinol + NAD(+) + n H(+)(out). It catalyses the reaction a plastoquinone + NADPH + (n+1) H(+)(in) = a plastoquinol + NADP(+) + n H(+)(out). In terms of biological role, NDH shuttles electrons from NAD(P)H:plastoquinone, via FMN and iron-sulfur (Fe-S) centers, to quinones in the photosynthetic chain and possibly in a chloroplast respiratory chain. The immediate electron acceptor for the enzyme in this species is believed to be plastoquinone. Couples the redox reaction to proton translocation, and thus conserves the redox energy in a proton gradient. The protein is NAD(P)H-quinone oxidoreductase subunit I, chloroplastic of Espeletia timotensis (Andean giant rosette).